The chain runs to 511 residues: DEP domain-containing protein 7 (511 aa).

The DEP domain maps to leucine 46–threonine 136.

Belongs to the DEPDC7 family.

This is DEP domain-containing protein 7 (Depdc7) from Rattus norvegicus (Rat).